The sequence spans 283 residues: MTAPRLTLPSPAKLNLMLHILGRREDGYHELQTLFQFLDYGDEITFAVRDDGVIRLHTEFDGVPHDSNLIVRAAKKLQEQSACSLGIDIWIDKILPMGGGIGGGSSNAATTLLGLNHLWRLGWDEDRLAALGLTLGADVPVFVRGHAAFAEGVGEKLTPVEPAEPWYVVLVPQVSVSTAEIFSDPLLTRNTPPIKVRPVPEGNSRNDCLPVVSRRYPEVRNALNLLGNFTEAKLTGTGSCVFGGFPSKAEADKVSALLTETLTGFVAKGSNVSMLHRKLQSLL.

Residue Lys-13 is part of the active site. 96–106 (PMGGGIGGGSS) contributes to the ATP binding site. Asp-138 is an active-site residue.

Belongs to the GHMP kinase family. IspE subfamily.

It carries out the reaction 4-CDP-2-C-methyl-D-erythritol + ATP = 4-CDP-2-C-methyl-D-erythritol 2-phosphate + ADP + H(+). It participates in isoprenoid biosynthesis; isopentenyl diphosphate biosynthesis via DXP pathway; isopentenyl diphosphate from 1-deoxy-D-xylulose 5-phosphate: step 3/6. Catalyzes the phosphorylation of the position 2 hydroxy group of 4-diphosphocytidyl-2C-methyl-D-erythritol. This is 4-diphosphocytidyl-2-C-methyl-D-erythritol kinase from Pseudomonas fluorescens (strain Pf0-1).